The sequence spans 669 residues: MNQTIKAKLELLPDSPGCYLHKDKNGTVIYVGKAKNLKNRVRSYFHGSHNTKTELLVSEIEDLEWIVVGSNIESLVLEINLIQRYKPKYNIMLKDDKYYPFLKITNEKYPRLLVVRKVQKDGATYFGPYPDVKAANEVKRLLDRIFPFRKCGLHEKKVCFYFHIHQCLCPVVNHVDPQVYKDMTQEVKEFLTGSDKKIVKELEGKMISASDNMEFEQAAEYRDVIKAIGTLRTKQRVMNQDLKDRDVFGYYVDKGWMCVQVFFVRQGKLIQRDVNMFPYYNDAEEDFLTYIGQFYQDNNHMMPREIFIPQDIDKDSVEAVVAASQEGNLLTKAQAKAVDAKVFTAKTLKFSDQKDVEQSIVKLDKELSSEKRLSSLLAKTQIIQPSRGEKKQLVNMATKNAQTQLQLKFDVAERDILKTTKAVENLGKILGIPKPVRIESFDNSNIMGTSPVSAMVVFIDGKPSKKDYRKYKIKTVVGADDYASMREVMTRRYSRALKEETALPDLIAMDGGAGQVNIAKEVLRELGLAIPVAGMQKNDKHQTSELLFGDPLEVVPLSRQSQEFFLLTRIQDEVHRFAITFHRQLRGKNTFSSKLDGIVGLGPKRKQKLLTTFKNLKAIEEATVQEVAEAGVPYEVAERVKNTLSAPHKSDENWESIKDNVPLLKSEKS.

A GIY-YIG domain is found at 14–91 (DSPGCYLHKD…IQRYKPKYNI (78 aa)). Positions 196–231 (KKIVKELEGKMISASDNMEFEQAAEYRDVIKAIGTL) constitute a UVR domain. Residues 647-669 (PHKSDENWESIKDNVPLLKSEKS) are disordered. The span at 648-658 (HKSDENWESIK) shows a compositional bias: basic and acidic residues.

This sequence belongs to the UvrC family. In terms of assembly, interacts with UvrB in an incision complex.

It localises to the cytoplasm. Functionally, the UvrABC repair system catalyzes the recognition and processing of DNA lesions. UvrC both incises the 5' and 3' sides of the lesion. The N-terminal half is responsible for the 3' incision and the C-terminal half is responsible for the 5' incision. The protein is UvrABC system protein C of Lactococcus lactis subsp. cremoris (strain MG1363).